We begin with the raw amino-acid sequence, 234 residues long: Glucosamine-6-phosphate deaminase (234 aa).

Aspartate 62 acts as the Proton acceptor; for enolization step in catalysis. The For ring-opening step role is filled by asparagine 128. The active-site Proton acceptor; for ring-opening step is histidine 130. Glutamate 135 functions as the For ring-opening step in the catalytic mechanism.

It belongs to the glucosamine/galactosamine-6-phosphate isomerase family. NagB subfamily.

The enzyme catalyses alpha-D-glucosamine 6-phosphate + H2O = beta-D-fructose 6-phosphate + NH4(+). It participates in amino-sugar metabolism; N-acetylneuraminate degradation; D-fructose 6-phosphate from N-acetylneuraminate: step 5/5. In terms of biological role, catalyzes the reversible isomerization-deamination of glucosamine 6-phosphate (GlcN6P) to form fructose 6-phosphate (Fru6P) and ammonium ion. The chain is Glucosamine-6-phosphate deaminase from Lactobacillus delbrueckii subsp. bulgaricus (strain ATCC 11842 / DSM 20081 / BCRC 10696 / JCM 1002 / NBRC 13953 / NCIMB 11778 / NCTC 12712 / WDCM 00102 / Lb 14).